We begin with the raw amino-acid sequence, 180 residues long: Large ribosomal subunit protein uL22 (180 aa).

The tract at residues 111-180 (VVVESRPAKD…ETSDAKGGSD (70 aa)) is disordered. The segment covering 142 to 166 (PAKKAPAKKAPAKKAPAKTAAKKTP) has biased composition (basic residues). The span at 171 to 180 (ETSDAKGGSD) shows a compositional bias: basic and acidic residues.

This sequence belongs to the universal ribosomal protein uL22 family. Part of the 50S ribosomal subunit.

Functionally, this protein binds specifically to 23S rRNA; its binding is stimulated by other ribosomal proteins, e.g. L4, L17, and L20. It is important during the early stages of 50S assembly. It makes multiple contacts with different domains of the 23S rRNA in the assembled 50S subunit and ribosome. In terms of biological role, the globular domain of the protein is located near the polypeptide exit tunnel on the outside of the subunit, while an extended beta-hairpin is found that lines the wall of the exit tunnel in the center of the 70S ribosome. This is Large ribosomal subunit protein uL22 from Mycobacterium avium (strain 104).